The primary structure comprises 162 residues: Nitrogen regulatory protein (162 aa).

The region spanning 12–156 is the PTS EIIA type-2 domain; the sequence is NVLNQECTRS…EELYEIITEA (145 aa). His-73 functions as the Tele-phosphohistidine intermediate in the catalytic mechanism.

The protein resides in the cytoplasm. Its function is as follows. Seems to have a role in regulating nitrogen assimilation. This is Nitrogen regulatory protein (ptsN) from Klebsiella oxytoca.